Consider the following 775-residue polypeptide: Transcription activator of gluconeogenesis HCBG_00867 (775 aa).

Residues 1–70 form a disordered region; it reads MTASTQNGSP…NAKDPLRPRR (70 aa). 2 stretches are compositionally biased toward polar residues: residues 21 to 41 and 48 to 60; these read NQES…QSPA and TAES…STAA. The segment at residues 77–105 is a DNA-binding region (zn(2)-C6 fungal-type); that stretch reads CFACQRAHLTCGDERPCQRCIKRGLQDAC. Disordered regions lie at residues 179–248, 286–351, 556–592, and 649–725; these read TQAK…PFGA, GAGD…NIYN, NLNV…AGGG, and QGKE…SPKQ. Residues 195-217 are compositionally biased toward polar residues; that stretch reads MQDTSINPSAFQAPSPTSTPNFD. Over residues 218–229 the composition is skewed to low complexity; sequence LSSNPPNRNLSS. 4 stretches are compositionally biased toward polar residues: residues 230–244, 292–323, 334–351, and 557–576; these read AMTQ…QTQD, PSDS…TQSP, WNPS…NIYN, and LNVN…TPRN. The span at 657–668 shows a compositional bias: gly residues; the sequence is GSDGKGGGGGGD. Low complexity predominate over residues 669-713; it reads VAATAATTSTSTSNGANSSGHANANRNNTNPKNSSPPSSSSAAAA.

This sequence belongs to the ERT1/acuK family.

Its subcellular location is the nucleus. Functionally, transcription factor which regulates nonfermentable carbon utilization. Activator of gluconeogenetic genes. This is Transcription activator of gluconeogenesis HCBG_00867 from Ajellomyces capsulatus (strain G186AR / H82 / ATCC MYA-2454 / RMSCC 2432) (Darling's disease fungus).